The sequence spans 333 residues: Procathepsin L (333 aa).

The first 17 residues, 1-17 (MNPTLILAAFCLGIASA), serve as a signal peptide directing secretion. Positions 18–113 (TLTFDHSLEA…KVFQEPLFYE (96 aa)) are cleaved as a propeptide — activation peptide. Glu-122 contributes to the Zn(2+) binding site. 2 cysteine pairs are disulfide-bonded: Cys-135–Cys-178 and Cys-169–Cys-211. The active site involves Cys-138. 5 residues coordinate Zn(2+): Glu-163, Asp-184, Glu-199, Glu-205, and Glu-209. An N-linked (GlcNAc...) asparagine glycan is attached at Asn-221. Residues Asp-227, Asp-250, His-253, Asp-273, and Asp-275 each contribute to the Zn(2+) site. Residues Cys-269 and Cys-322 are joined by a disulfide bond. Residue His-276 is part of the active site. Residues 289–291 (ESD) constitute a propeptide that is removed on maturation. Residue Asn-300 is part of the active site.

The protein belongs to the peptidase C1 family. Dimer of a heavy and a light chain linked by disulfide bonds. Interacts with Long isoform of CD74/Ii chain; the interaction stabilizes the conformation of mature CTSL. During export along the endocytic pathway, pro-CTSL undergoes several proteolytic cleavages to generate the CTSL single-chain and two-chain mature forms, composed of a heavy chain linked to a light chain by disulfide bonds. Autocleavage; produces the single-chain CTSL after cleavage of the propeptide. The cleavage can be intermolecular.

Its subcellular location is the lysosome. It localises to the apical cell membrane. The protein resides in the cytoplasmic vesicle. The protein localises to the secretory vesicle. It is found in the chromaffin granule. Its subcellular location is the secreted. It localises to the extracellular space. The protein resides in the nucleus. The catalysed reaction is Specificity close to that of papain. As compared to cathepsin B, cathepsin L exhibits higher activity toward protein substrates, but has little activity on Z-Arg-Arg-NHMec, and no peptidyl-dipeptidase activity.. With respect to regulation, inhibited by the propeptide produced by autocleavage. Long isoform of CD74/Ii chain stabilizes the conformation of mature CTSL by binding to its active site and serving as a chaperone to help maintain a pool of mature enzyme in endocytic compartments and extracellular space of APCs. IFNG enhances the conversion into the CTSL mature and active form. Inhibited by CST6. Inhibited by the glycopeptide antibiotic teicoplanin. Inhibited by amantadine. Functionally, thiol protease important for the overall degradation of proteins in lysosomes. Plays a critical for normal cellular functions such as general protein turnover, antigen processing and bone remodeling. Involved in the solubilization of cross-linked TG/thyroglobulin and in the subsequent release of thyroid hormone thyroxine (T4) by limited proteolysis of TG/thyroglobulin in the thyroid follicle lumen. In neuroendocrine chromaffin cells secretory vesicles, catalyzes the prohormone proenkephalin processing to the active enkephalin peptide neurotransmitter. In thymus, regulates CD4(+) T cell positive selection by generating the major histocompatibility complex class II (MHCII) bound peptide ligands presented by cortical thymic epithelial cells. Also mediates invariant chain processing in cortical thymic epithelial cells. Major elastin-degrading enzyme at neutral pH. Accumulates as a mature and active enzyme in the extracellular space of antigen presenting cells (APCs) to regulate degradation of the extracellular matrix in the course of inflammation. Secreted form generates endostatin from COL18A1. Critical for cardiac morphology and function. Plays an important role in hair follicle morphogenesis and cycling, as well as epidermal differentiation. Required for maximal stimulation of steroidogenesis by TIMP1. (Microbial infection) In cells lacking TMPRSS2 expression, facilitates human coronaviruses SARS-CoV and SARS-CoV-2 infections via a slow acid-activated route with the proteolysis of coronavirus spike (S) glycoproteins in lysosome for entry into host cell. Proteolysis within lysosomes is sufficient to activate membrane fusion by coronaviruses SARS-CoV and EMC (HCoV-EMC) S as well as Zaire ebolavirus glycoproteins. Its function is as follows. Functions in the regulation of cell cycle progression through proteolytic processing of the CUX1 transcription factor. Translation initiation at downstream start sites allows the synthesis of isoforms that are devoid of a signal peptide and localize to the nucleus where they cleave the CUX1 transcription factor and modify its DNA binding properties. The sequence is that of Procathepsin L from Homo sapiens (Human).